Reading from the N-terminus, the 475-residue chain is Protein FIZZY-RELATED 1 (475 aa).

The interval 1–27 (MEEDESTTPKKKSDSQLNLPPSMNRPT) is disordered. A compositionally biased stretch (polar residues) spans 15-27 (SQLNLPPSMNRPT). WD repeat units follow at residues 166-203 (QDDF…VTKL), 207-246 (GVDE…NIRT), 249-289 (GHRL…SKLK), 290-329 (GHKS…PVLR), 332-374 (EHAA…HLNC), 376-417 (DTNS…KLAT), and 420-459 (GHSY…KSQS).

This sequence belongs to the WD repeat CDC20/Fizzy family. Associates with the APC/C complex. Interacts with CDC20-1, CDC20-2, CYCA1-1, CYCA1-2, CYCA3-4, CYCB1-1 and CYCB1-2. Binds to GIG1. As to expression, expressed in the root tip, predominantly in the root cap, quiescent center cells, surrounding stem cells and columella.

Its subcellular location is the nucleus. It functions in the pathway protein modification; protein ubiquitination. In terms of biological role, activator protein that regulates the ubiquitin ligase activity and substrate specificity of the anaphase promoting complex/cyclosome (APC/C). Required for meristem organization and maintenance of quiescent center identity and stem cells. This Arabidopsis thaliana (Mouse-ear cress) protein is Protein FIZZY-RELATED 1 (FZR1).